A 322-amino-acid polypeptide reads, in one-letter code: MIQRGFTMQERREKQGNNSPYLLTPYEMANLVFKTGAISFTVSAGTQPFQYLLNKLQFSQSGTPSGLSGGLFRGMYRGFLPYAIAGQKRGAVAVTHKQTNKVTEEEEFEAPFRQRWWGTIFFSQADLLVSNGLSGKARLQNVGVINAENFKWSLSNFWKLTSVNWGSRSFAGGVNFALIGFAGDYVSSFYKFDKDLYNKILGGATSGVIATLFTTAPNAYADSKLLQTKVAENNRLITVSPYTMFGQMKSHVKAVGLKEAFMTFFKVSYLQQVAVRAPQAAITFALIFGMDEYMGPQPLKKVWPGRVEELESENPSPSPTKK.

Serine 68 is a catalytic residue.

It is found in the secreted. It localises to the host mitochondrion membrane. In terms of biological role, serine protease effector that inhibits host cell autophagy by targeting SNX17. Localizes to the host endoplasmic reticulum-mitochondria contact site and catalyzes degradation of host SNX17, thereby impairing endoplasmic reticulum-mitochondria communication, leading to inhibit autophagy as well as staurosporine-induced apoptosis. The polypeptide is Serine protease Lpg1137 (Legionella pneumophila subsp. pneumophila (strain Philadelphia 1 / ATCC 33152 / DSM 7513)).